The chain runs to 745 residues: MPSVDEITNGVDELDFVDDADIDFSDIEQKYSVKFDEGLDDVIVIEGVPVITESRQQKLFETIQKRFKTHANIDIAVEGMHIPYADNGESKGYIFVEMASAEDAAQAIRQMDGYAFDKKHRFSVHRFTDVEKFASLSETYEEPQEEEFKPREHLRSWLADPAGRDQLVICRGDDVEIAWHNRSSDPQVEHSRPRWTESYVQWSPLGTFLTTFHRQGIQIWGGPSCERFMRFPHPGARLVDFSPSEKYMVTWSHEPIQVPDNAPIGPQFFGPEDEGNRIAVWEVRTGHLLRSFPVPQDESGQPGQLKGFSWPFLKWSPDDKYCARLNPGQAISVYETPSMGLLEKKSIKIEGVVDFEWCPMGDKDRELAEAAKPNKKARDNMIVYWQPEVANQPARVTVMAVPSRTILRSKNLFNVSDCKLHWHPQGDYLCVKVDRHTKTKKSMFCNLEIFRVREKEFPVEVVELKDAVTAFAWEPFGTHFALISSNDPQLGTPASGITIKTQLNFYHLHPKGDFRPLKVFDNKTANTLFWSPRGRHIVVATLGSSQKFDLEWYDVDFMHEVRQGNPSADPADDVKLIGTGEHYGITDLEWDPSGRYVATSASVWRHSLENGFAIWDFKGQELQKHIQDRFKQILWRPRPRTLLGKDEQKRVRKNLREYSKQFEEEDAAEESNLASAERELYQRILEEWKAWRARSRRDLEQLRADLGREEVGQSVDHAKKLAEEATEEVQEWMEEIIEETEEVLA.

One can recognise an RRM domain in the interval 41–129 (DVIVIEGVPV…HRFSVHRFTD (89 aa)). WD repeat units follow at residues 189–230 (EHSR…RFMR), 251–293 (WSHE…RSFP), 303–344 (GQLK…LLEK), and 580–625 (GEHY…LQKH). A coiled-coil region spans residues 644–745 (GKDEQKRVRK…IIEETEEVLA (102 aa)).

This sequence belongs to the eIF-3 subunit B family. In terms of assembly, component of the eukaryotic translation initiation factor 3 (eIF-3) complex.

It localises to the cytoplasm. Functionally, RNA-binding component of the eukaryotic translation initiation factor 3 (eIF-3) complex, which is involved in protein synthesis of a specialized repertoire of mRNAs and, together with other initiation factors, stimulates binding of mRNA and methionyl-tRNAi to the 40S ribosome. The eIF-3 complex specifically targets and initiates translation of a subset of mRNAs involved in cell proliferation. This chain is Eukaryotic translation initiation factor 3 subunit B, found in Mycosarcoma maydis (Corn smut fungus).